Consider the following 530-residue polypeptide: Type II methyltransferase M.MjaII (530 aa).

It belongs to the N(4)/N(6)-methyltransferase family. N(4) subfamily.

It carries out the reaction a 2'-deoxycytidine in DNA + S-adenosyl-L-methionine = an N(4)-methyl-2'-deoxycytidine in DNA + S-adenosyl-L-homocysteine + H(+). Functionally, an alpha subtype methylase that recognizes the double-stranded sequence 5'-GGNCC-3', methylates C-5 on both strands, and protects the DNA from cleavage by the MjaII endonuclease. This is Type II methyltransferase M.MjaII (mjaIIM) from Methanocaldococcus jannaschii (strain ATCC 43067 / DSM 2661 / JAL-1 / JCM 10045 / NBRC 100440) (Methanococcus jannaschii).